We begin with the raw amino-acid sequence, 267 residues long: MPNRDTQSQNDTPRHSPEAAEPQRDSLFAAPIAKLGDWTFDEKVAEVFPDMIQRSVPGYSNIISMIGMLAERFVQPNSQIYDLGCSLGAATLSMRRNIKAEGCKIIAVDNSPAMVERCRRHIDAFRAETPVDVVEADILDIKLENASMVVLNFTLQFLEPANRQRLLNQVYQGLRPGGALVLSEKFSFADHNVGELLFNMHHDFKRANGYSELEISQKRSMLENVMLTDSVETHKNRLHQAGFEHAEVWFQCFNFGSLIALKAGEAQ.

The segment covering 1-11 has biased composition (polar residues); it reads MPNRDTQSQND. The disordered stretch occupies residues 1 to 25; the sequence is MPNRDTQSQNDTPRHSPEAAEPQRD. The segment covering 12 to 24 has biased composition (basic and acidic residues); the sequence is TPRHSPEAAEPQR. S-adenosyl-L-methionine is bound by residues Tyr-59, 84–86, 109–110, 137–138, Asn-152, and Arg-219; these read GCS, DN, and DI.

This sequence belongs to the class I-like SAM-binding methyltransferase superfamily. Cx-SAM synthase family. Homodimer.

It carries out the reaction prephenate + S-adenosyl-L-methionine = carboxy-S-adenosyl-L-methionine + 3-phenylpyruvate + H2O. Catalyzes the conversion of S-adenosyl-L-methionine (SAM) to carboxy-S-adenosyl-L-methionine (Cx-SAM). In Yersinia pseudotuberculosis serotype O:1b (strain IP 31758), this protein is Carboxy-S-adenosyl-L-methionine synthase.